A 474-amino-acid chain; its full sequence is MPKKLLIKTWGCQMNEYDSSKMADLLNAANGFELTEVPEEADVLLLNTCSIREKAQEKVFHQLGRWKRLKEKKPDLVIGVGGCVATQEGDAIRKRAPYVDVIFGPQTLHRLPQMIKDSQSNHGPVMDISFPEVEKFDNLPEPRADGVTAFVSIMEGCSKYCTYCVVPYTRGEEVSRPIDDVLYEVAQLAEQGVREVNLLGQNVNAFRGPTHDGEMASFAELLRLVAAIDGIDRIRYTTSHPIEFTDDIIEVYTDTPELVNYLHLPVQSGSDRILTMMKRPHTVLEYKSKIRKLRKVRPDITMSSDFIVAFPGESDQDFQDTMKLIRDIDFDISYSFVFSPRPGTPAADYPCDISEKVKKERLYELQQQINTQAMRHARQMLNTEQRILVEGPSRKNIMELRGRTENNRIVNFEGSAELIGQFVDVNITDVFTNSLRGELVRTEAEMDLRVAMTPLEVMEKARKEDELGVGVYTP.

Residues 3-120 enclose the MTTase N-terminal domain; it reads KKLLIKTWGC…LPQMIKDSQS (118 aa). Residues C12, C49, C83, C157, C161, and C164 each coordinate [4Fe-4S] cluster. Positions 143-375 constitute a Radical SAM core domain; that stretch reads RADGVTAFVS…QQQINTQAMR (233 aa). In terms of domain architecture, TRAM spans 378–441; it reads RQMLNTEQRI…TNSLRGELVR (64 aa).

The protein belongs to the methylthiotransferase family. MiaB subfamily. Monomer. The cofactor is [4Fe-4S] cluster.

The protein resides in the cytoplasm. The enzyme catalyses N(6)-dimethylallyladenosine(37) in tRNA + (sulfur carrier)-SH + AH2 + 2 S-adenosyl-L-methionine = 2-methylsulfanyl-N(6)-dimethylallyladenosine(37) in tRNA + (sulfur carrier)-H + 5'-deoxyadenosine + L-methionine + A + S-adenosyl-L-homocysteine + 2 H(+). Functionally, catalyzes the methylthiolation of N6-(dimethylallyl)adenosine (i(6)A), leading to the formation of 2-methylthio-N6-(dimethylallyl)adenosine (ms(2)i(6)A) at position 37 in tRNAs that read codons beginning with uridine. The protein is tRNA-2-methylthio-N(6)-dimethylallyladenosine synthase of Photobacterium profundum (strain SS9).